The chain runs to 469 residues: Ribulose bisphosphate carboxylase large chain (469 aa).

At Lys5 the chain carries N6,N6,N6-trimethyllysine. Residues Asn114 and Thr164 each coordinate substrate. The Proton acceptor role is filled by Lys166. A substrate-binding site is contributed by Lys168. 3 residues coordinate Mg(2+): Lys192, Asp194, and Glu195. Lys192 is subject to N6-carboxylysine. The active-site Proton acceptor is His285. Substrate is bound by residues Arg286, His318, and Ser370.

This sequence belongs to the RuBisCO large chain family. Type I subfamily. As to quaternary structure, heterohexadecamer of 8 large chains and 8 small chains; disulfide-linked. The disulfide link is formed within the large subunit homodimers. The cofactor is Mg(2+). Post-translationally, the disulfide bond which can form in the large chain dimeric partners within the hexadecamer appears to be associated with oxidative stress and protein turnover.

The protein localises to the plastid. The protein resides in the chloroplast. It catalyses the reaction 2 (2R)-3-phosphoglycerate + 2 H(+) = D-ribulose 1,5-bisphosphate + CO2 + H2O. The enzyme catalyses D-ribulose 1,5-bisphosphate + O2 = 2-phosphoglycolate + (2R)-3-phosphoglycerate + 2 H(+). RuBisCO catalyzes two reactions: the carboxylation of D-ribulose 1,5-bisphosphate, the primary event in carbon dioxide fixation, as well as the oxidative fragmentation of the pentose substrate in the photorespiration process. Both reactions occur simultaneously and in competition at the same active site. This is Ribulose bisphosphate carboxylase large chain from Antirhea lucida (Palo iloron).